The following is a 507-amino-acid chain: ATP synthase subunit alpha, chloroplastic (507 aa).

ATP is bound at residue Ile-169–Lys-176.

Belongs to the ATPase alpha/beta chains family. F-type ATPases have 2 components, CF(1) - the catalytic core - and CF(0) - the membrane proton channel. CF(1) has five subunits: alpha(3), beta(3), gamma(1), delta(1), epsilon(1). CF(0) has four main subunits: a, b, b' and c.

It is found in the plastid. It localises to the chloroplast thylakoid membrane. It carries out the reaction ATP + H2O + 4 H(+)(in) = ADP + phosphate + 5 H(+)(out). Its function is as follows. Produces ATP from ADP in the presence of a proton gradient across the membrane. The alpha chain is a regulatory subunit. This Saccharum hybrid (Sugarcane) protein is ATP synthase subunit alpha, chloroplastic.